The primary structure comprises 142 residues: Large ribosomal subunit protein uL11 (142 aa).

It belongs to the universal ribosomal protein uL11 family. In terms of assembly, part of the ribosomal stalk of the 50S ribosomal subunit. Interacts with L10 and the large rRNA to form the base of the stalk. L10 forms an elongated spine to which L12 dimers bind in a sequential fashion forming a multimeric L10(L12)X complex. Post-translationally, one or more lysine residues are methylated.

Its function is as follows. Forms part of the ribosomal stalk which helps the ribosome interact with GTP-bound translation factors. This is Large ribosomal subunit protein uL11 from Serratia marcescens.